The following is a 345-amino-acid chain: Anthranilate phosphoribosyltransferase (345 aa).

5-phospho-alpha-D-ribose 1-diphosphate is bound by residues G80, 83-84, T88, 90-93, 108-116, and S120; these read GD, NIST, and KHGNRSVSS. G80 lines the anthranilate pocket. Position 92 (S92) interacts with Mg(2+). N111 is a binding site for anthranilate. R166 contributes to the anthranilate binding site. 2 residues coordinate Mg(2+): D225 and E226.

It belongs to the anthranilate phosphoribosyltransferase family. Homodimer. It depends on Mg(2+) as a cofactor.

It carries out the reaction N-(5-phospho-beta-D-ribosyl)anthranilate + diphosphate = 5-phospho-alpha-D-ribose 1-diphosphate + anthranilate. It functions in the pathway amino-acid biosynthesis; L-tryptophan biosynthesis; L-tryptophan from chorismate: step 2/5. Catalyzes the transfer of the phosphoribosyl group of 5-phosphorylribose-1-pyrophosphate (PRPP) to anthranilate to yield N-(5'-phosphoribosyl)-anthranilate (PRA). This chain is Anthranilate phosphoribosyltransferase, found in Pelotomaculum thermopropionicum (strain DSM 13744 / JCM 10971 / SI).